Consider the following 316-residue polypeptide: Apolipoprotein E (316 aa).

Residues 1-18 (MKVLWVAVVVALLAGCQA) form the signal peptide. The O-linked (GalNAc...) threonine glycan is linked to Thr32. 8 repeat units span residues 79–100 (ALME…GQLG), 101–122 (PMAQ…ARLG), 123–144 (SDME…AMLG), 145–166 (QSTE…KRLL), 167–188 (RDAD…EGAE), 189–210 (RSLS…SRAA), 211–232 (TLST…QKLH), and 233–254 (GRLE…QQLE). The interval 79-254 (ALMEETMKEV…RLDKIRQQLE (176 aa)) is 8 X 22 AA approximate tandem repeats. Residue Met142 is modified to Methionine sulfoxide. Phosphoserine is present on Ser146. Residues 157-167 (HLRKLPKRLLR) form an LDL and other lipoprotein receptors binding region. 161–164 (LPKR) provides a ligand contact to heparin. A lipid-binding and lipoprotein association region spans residues 209 to 289 (AATLSTLAGQ…SWFEPLVEDM (81 aa)). Thr211 is a glycosylation site (O-linked (GalNAc...) threonine). 228-235 (RQKLHGRL) provides a ligand contact to heparin. A homooligomerization region spans residues 265–316 (NQMRLQAEAFQARLRSWFEPLVEDMQRQWAGLVEKVQLALRPSPTSPPSENH). The segment at 277–289 (RLRSWFEPLVEDM) is specificity for association with VLDL. Thr309 is a glycosylation site (O-linked (GalNAc...) threonine). Ser310 carries O-linked (GalNAc...) serine glycosylation.

This sequence belongs to the apolipoprotein A1/A4/E family. In terms of assembly, homotetramer. May interact with ABCA1; functionally associated with ABCA1 in the biogenesis of HDLs. May interact with APP/A4 amyloid-beta peptide; the interaction is extremely stable in vitro but its physiological significance is unclear. May interact with MAPT. May interact with MAP2. In the cerebrospinal fluid, interacts with secreted SORL1. Interacts with PMEL; this allows the loading of PMEL luminal fragment on ILVs to induce fibril nucleation. In terms of processing, APOE exists as multiple glycosylated and sialylated glycoforms within cells and in plasma. The extent of glycosylation and sialylation are tissue and context specific. Glycated in plasma VLDL. Post-translationally, phosphorylated by FAM20C in the extracellular medium.

It is found in the secreted. The protein resides in the extracellular space. Its subcellular location is the extracellular matrix. The protein localises to the extracellular vesicle. It localises to the endosome. It is found in the multivesicular body. Functionally, APOE is an apolipoprotein, a protein associating with lipid particles, that mainly functions in lipoprotein-mediated lipid transport between organs via the plasma and interstitial fluids. APOE is a core component of plasma lipoproteins and is involved in their production, conversion and clearance. Apolipoproteins are amphipathic molecules that interact both with lipids of the lipoprotein particle core and the aqueous environment of the plasma. As such, APOE associates with chylomicrons, chylomicron remnants, very low density lipoproteins (VLDL) and intermediate density lipoproteins (IDL) but shows a preferential binding to high-density lipoproteins (HDL). It also binds a wide range of cellular receptors including the LDL receptor/LDLR and the very low-density lipoprotein receptor/VLDLR that mediate the cellular uptake of the APOE-containing lipoprotein particles. Finally, APOE also has a heparin-binding activity and binds heparan-sulfate proteoglycans on the surface of cells, a property that supports the capture and the receptor-mediated uptake of APOE-containing lipoproteins by cells. This chain is Apolipoprotein E (APOE), found in Bos taurus (Bovine).